The following is a 296-amino-acid chain: MDFGLATTLYPDEYNYQTDAYSPTSSPVDLVQVIQQLHASLDPRTVFACYGKVLGQHLPIQGVRLQSEQHKLSWGKRYGISLKRQIICGGTPLTLQYQLLTPLTPSQSICLQEIEPLLLQPLLNAMQYQEMSMQAMFDALTGLGNRHYYSQSLKNAVARAQRKQGSVSLIVLDLDNFKKLNDKYGHKCGDYILKEFGDIIRSSIRSTDQAFRIGGDEFVVIVQGNIHAAGLLCERIVSATNTHASFHQFGVSCSLGAAEASETMEAEQLYEQADKTLYQAKASGRNCYKLSPTQLS.

The GGDEF domain maps to 165–293 (GSVSLIVLDL…GRNCYKLSPT (129 aa)). Asp-173, Leu-174, and Asp-216 together coordinate Mg(2+). Asp-216 is a catalytic residue.

Mg(2+) serves as cofactor.

The enzyme catalyses 2 GTP = 3',3'-c-di-GMP + 2 diphosphate. Catalyzes the synthesis of cyclic-di-GMP (c-di-GMP) via the condensation of 2 GTP molecules. May be involved in the regulation of formation of solid surface-associated biofilms and pellicles according to environmental conditions. The polypeptide is Diguanylate cyclase DgcS (Shewanella oneidensis (strain ATCC 700550 / JCM 31522 / CIP 106686 / LMG 19005 / NCIMB 14063 / MR-1)).